A 1041-amino-acid polypeptide reads, in one-letter code: MELQKGKGTVAAAASGAAGGGGGGAGAGAPGGGRLLLSTSLDAKDELEERLERCMSIVTSMTAGVSEREANDALNAYVCKGPPQHEEICLGLFTLVLTEPAQAQKCYRDLALVSRDGMNIVLNKINQLLMEKYLKLQDTCRTQLVWLVRELVKSGVLGADGVCMTFMKQIAGGDVTAKNIWLAESVLDILTEQREWVLKSSILIAMAVYTYLRLIVDHHGTAQLQTLRQKEVDFCISLLRERFMECLMIGRDLVRLLQNVARIPEFELLWKDIIHNPQALSPQFTGILQLLQSRTSRKFLACRLTPDMETKLLFMTSRVRFGQQKRYQDWFQRQYLSTPDSQSLRCDLIRYICGVVHPSNEVLSSDILPRWAIIGWLLTTCTSNVAASNAKLALFYDWLFFSPEKDSIMNIEPAILVMHHSMKPHPAITATLLDFMCRIIPNFYPPLEGHVRQGVFSSLNHIVEKRVLAHLAPLFDNPKLDKELRSMLREKFPEFCSSPSPPVEVKIEEPVSMEMDNHLSDKDESCYDNAEAAFSDDEEDLNSKGKKREFRFHPIKETVVEEPVDVTPYLDQLDESLRDKVLQLQKGSDTEAQCEVMQEIVDQVLEEDFDSEQLSVLASCLQELFKAHFRGEVLPEEVTEESLEESVGKPLYLIFRNLCQMQEDNSSFSLLLDLLSELYQKQPKIGYHLLYYLRASKAAAGKMNLYESFAQATQLGDLHTCLMMDMKACQEDDVRLLCHLTPSIYTEFPDETLRSGELLNMIVAVIDSAQLQELVCHVMMGNLVMFRKDSVLNILIQSLDWETFEQYCAWQLFLAHNIPLETIIPILQHLKYKEHPEALSCLLLQLRREKPSEEMVKMVLSRPCHPDDQFTTSILRHWCMKHDELLAEHIKALLIKNNSLPRKRQSLRSSSSKLAQLTLEQILEHLDNLRLNLANTKQNFFSQTPILQALQHVQASCDEAHKMKFSDLFSLAEEYEDSSTKPPKSRRKAALSSPRSRKNATQPPNAEEESGSSSASEEEDTKPKPTKRKRKGSSAVGSDSD.

Residue Met-1 is modified to N-acetylmethionine. Phosphoserine occurs at positions 500, 535, and 993. Residues 975–1041 form a disordered region; sequence YEDSSTKPPK…GSSAVGSDSD (67 aa). Residues 1006–1020 show a composition bias toward acidic residues; it reads AEEESGSSSASEEED.

It belongs to the Integrator subunit 3 family. As to quaternary structure, component of the Integrator complex, composed of core subunits INTS1, INTS2, INTS3, INTS4, INTS5, INTS6, INTS7, INTS8, INTS9/RC74, INTS10, INTS11/CPSF3L, INTS12, INTS13, INTS14 and INTS15. The core complex associates with protein phosphatase 2A subunits PPP2CA and PPP2R1A, to form the Integrator-PP2A (INTAC) complex. Component of the SOSS complex, composed of SOSS-B (SOSS-B1/NABP2 or SOSS-B2/NABP1), SOSS-A/INTS3 and SOSS-C/INIP. SOSS complexes containing SOSS-B1/NABP2 are more abundant than complexes containing SOSS-B2/NABP1. Interacts with SOSS-B1/NABP2, SOSS-B2/NABP1 and SOSS-C/INIP; the interaction is direct. Interacts with NBN/NBS1.

The protein resides in the nucleus. It localises to the cytoplasm. In terms of biological role, component of the integrator complex, a multiprotein complex that terminates RNA polymerase II (Pol II) transcription in the promoter-proximal region of genes. The integrator complex provides a quality checkpoint during transcription elongation by driving premature transcription termination of transcripts that are unfavorably configured for transcriptional elongation: the complex terminates transcription by (1) catalyzing dephosphorylation of the C-terminal domain (CTD) of Pol II subunit POLR2A/RPB1 and SUPT5H/SPT5, (2) degrading the exiting nascent RNA transcript via endonuclease activity and (3) promoting the release of Pol II from bound DNA. The integrator complex is also involved in terminating the synthesis of non-coding Pol II transcripts, such as enhancer RNAs (eRNAs), small nuclear RNAs (snRNAs), telomerase RNAs and long non-coding RNAs (lncRNAs). Within the integrator complex, INTS3 is involved in the post-termination step: INTS3 binds INTS7 in the open conformation of integrator complex and prevents the rebinding of Pol II to the integrator after termination cycle. Mediates recruitment of cytoplasmic dynein to the nuclear envelope, probably as component of the integrator complex. Functionally, component of the SOSS complex, a multiprotein complex that functions downstream of the MRN complex to promote DNA repair and G2/M checkpoint. The SOSS complex associates with single-stranded DNA at DNA lesions and influences diverse endpoints in the cellular DNA damage response including cell-cycle checkpoint activation, recombinational repair and maintenance of genomic stability. The SOSS complex is required for efficient homologous recombination-dependent repair of double-strand breaks (DSBs) and ATM-dependent signaling pathways. In the SOSS complex, it is required for the assembly of the complex and for stabilization of the complex at DNA damage sites. The sequence is that of Integrator complex subunit 3 (Ints3) from Mus musculus (Mouse).